A 142-amino-acid chain; its full sequence is Large ribosomal subunit protein bL17 (142 aa).

It belongs to the bacterial ribosomal protein bL17 family. Part of the 50S ribosomal subunit. Contacts protein L32.

This Chlamydia muridarum (strain MoPn / Nigg) protein is Large ribosomal subunit protein bL17.